The chain runs to 637 residues: Chaperone protein DnaK (637 aa).

A Phosphothreonine; by autocatalysis modification is found at T198. Residues M597–K637 are disordered. The span at P608–P621 shows a compositional bias: gly residues. Acidic residues predominate over residues D627–K637.

The protein belongs to the heat shock protein 70 family.

In terms of biological role, acts as a chaperone. This Syntrophus aciditrophicus (strain SB) protein is Chaperone protein DnaK.